The primary structure comprises 464 residues: tRNA modification GTPase MnmE (464 aa).

The (6S)-5-formyl-5,6,7,8-tetrahydrofolate site is built by Arg29, Glu91, and Arg131. One can recognise a TrmE-type G domain in the interval 226 to 387 (GLKVALTGKP…LINYLLKKCG (162 aa)). Residue Asn236 participates in K(+) binding. Residues 236 to 241 (NVGKSS), 255 to 261 (TDLPGTT), and 280 to 283 (DTAG) each bind GTP. Ser240 is a Mg(2+) binding site. Thr255, Leu257, and Thr260 together coordinate K(+). Thr261 contacts Mg(2+). Lys464 serves as a coordination point for (6S)-5-formyl-5,6,7,8-tetrahydrofolate.

Belongs to the TRAFAC class TrmE-Era-EngA-EngB-Septin-like GTPase superfamily. TrmE GTPase family. In terms of assembly, homodimer. Heterotetramer of two MnmE and two MnmG subunits. K(+) is required as a cofactor.

It localises to the cytoplasm. Functionally, exhibits a very high intrinsic GTPase hydrolysis rate. Involved in the addition of a carboxymethylaminomethyl (cmnm) group at the wobble position (U34) of certain tRNAs, forming tRNA-cmnm(5)s(2)U34. This chain is tRNA modification GTPase MnmE, found in Prochlorococcus marinus (strain NATL2A).